The sequence spans 448 residues: Trigger factor (448 aa).

In terms of domain architecture, PPIase FKBP-type spans 172–257 (GDRVTVDFVG…MKKIEWPHMP (86 aa)).

The protein belongs to the FKBP-type PPIase family. Tig subfamily.

It is found in the cytoplasm. It catalyses the reaction [protein]-peptidylproline (omega=180) = [protein]-peptidylproline (omega=0). Involved in protein export. Acts as a chaperone by maintaining the newly synthesized protein in an open conformation. Functions as a peptidyl-prolyl cis-trans isomerase. In Burkholderia vietnamiensis (strain G4 / LMG 22486) (Burkholderia cepacia (strain R1808)), this protein is Trigger factor.